The sequence spans 493 residues: Proline--tRNA ligase (493 aa).

Belongs to the class-II aminoacyl-tRNA synthetase family. ProS type 3 subfamily. As to quaternary structure, homodimer.

The protein localises to the cytoplasm. It catalyses the reaction tRNA(Pro) + L-proline + ATP = L-prolyl-tRNA(Pro) + AMP + diphosphate. Catalyzes the attachment of proline to tRNA(Pro) in a two-step reaction: proline is first activated by ATP to form Pro-AMP and then transferred to the acceptor end of tRNA(Pro). The chain is Proline--tRNA ligase from Azobacteroides pseudotrichonymphae genomovar. CFP2.